Consider the following 978-residue polypeptide: Rab3 GTPase-activating protein catalytic subunit (978 aa).

3 disordered regions span residues 533–554 (EGKK…TASD), 586–621 (HSDT…RLHQ), and 908–936 (EEEP…GREL). The segment covering 540–554 (LYSSSESSVNKTASD) has biased composition (polar residues). 2 stretches are compositionally biased toward basic and acidic residues: residues 586 to 619 (HSDT…EGRL) and 909 to 922 (EEPK…DRRQ).

Belongs to the Rab3-GAP catalytic subunit family. In terms of assembly, the Rab3 GTPase-activating complex is a heterodimer composed of rab3gap1 and rab3gap2. The Rab3 GTPase-activating complex interacts with DMXL2. Interacts with LMAN1.

The protein resides in the cytoplasm. Its subcellular location is the endoplasmic reticulum. It localises to the golgi apparatus. It is found in the cis-Golgi network. In terms of biological role, catalytic subunit of the Rab3 GTPase-activating (Rab3GAP) complex composed of rab3gap1 and rab3gap2, which has GTPase-activating protein (GAP) activity towards various Rab3 subfamily members (RAB3A, RAB3B, RAB3C and RAB3D), RAB5A and RAB43, and guanine nucleotide exchange factor (GEF) activity towards RAB18. As part of the Rab3GAP complex, acts as a GAP for Rab3 proteins by converting active RAB3-GTP to the inactive form RAB3-GDP. Rab3 proteins are involved in regulated exocytosis of neurotransmitters and hormones. The Rab3GAP complex, acts as a GEF for RAB18 by promoting the conversion of inactive RAB18-GDP to the active form RAB18-GTP. Recruits and stabilizes RAB18 at the cis-Golgi membrane where RAB18 is most likely activated. Also involved in RAB18 recruitment at the endoplasmic reticulum (ER) membrane where it maintains proper ER structure. Required for normal eye and brain development. May participate in neurodevelopmental processes such as proliferation, migration and differentiation before synapse formation, and non-synaptic vesicular release of neurotransmitters. This chain is Rab3 GTPase-activating protein catalytic subunit (rab3gap1), found in Xenopus laevis (African clawed frog).